Here is a 142-residue protein sequence, read N- to C-terminus: Putative phosphatidylglycerol/phosphatidylinositol transfer protein 2 (142 aa).

The N-terminal stretch at 1–20 is a signal peptide; it reads MKFYLYLSILLILLTSTSFG.

This sequence belongs to the NPC2 family. In terms of assembly, monomer.

Functionally, catalyzes the intermembrane transfer of phosphatidylglycerol and phosphatidylinositol. This chain is Putative phosphatidylglycerol/phosphatidylinositol transfer protein 2, found in Dictyostelium discoideum (Social amoeba).